The sequence spans 155 residues: Phytohormone-binding protein CSBP (155 aa).

Residues Leu22, Gln67, Glu69, and 139–142 (TLMY) each bind trans-zeatin. Residue Gln67 participates in gibberellin A3 binding. Thr139 is a gibberellin A3 binding site.

This sequence belongs to the BetVI family. As to quaternary structure, monomer.

Functionally, binds the cytokinin trans-zeatin in vitro. Binds gibberellin A3 (GA3) in vitro. The protein is Phytohormone-binding protein CSBP of Vigna radiata var. radiata (Mung bean).